Consider the following 448-residue polypeptide: Argininosuccinate synthase (448 aa).

ATP is bound by residues 17–25 and A43; that span reads AFSGGLDTS. Y99 serves as a coordination point for L-citrulline. The ATP site is built by G129 and T131. T131, N135, and D136 together coordinate L-aspartate. An L-citrulline-binding site is contributed by N135. D136 contacts ATP. Residues R139 and S192 each contribute to the L-citrulline site. D194 is a binding site for ATP. L-citrulline is bound by residues T201, E203, and E280.

It belongs to the argininosuccinate synthase family. Type 2 subfamily. In terms of assembly, homotetramer.

The protein resides in the cytoplasm. The enzyme catalyses L-citrulline + L-aspartate + ATP = 2-(N(omega)-L-arginino)succinate + AMP + diphosphate + H(+). It functions in the pathway amino-acid biosynthesis; L-arginine biosynthesis; L-arginine from L-ornithine and carbamoyl phosphate: step 2/3. The polypeptide is Argininosuccinate synthase (Enterobacter sp. (strain 638)).